We begin with the raw amino-acid sequence, 563 residues long: MDTKTLIAAEIAKIVPELEQAAIFNLLETPKNSDMGDLAFPAFSLAKALRKAPQAIASDLAERIDASQFEKVAAVGPYVNFFLDKASISAQVLTQVIADGADYAQQDEGQGRHIAIDMSSPNIAKPFSIGHLRSTVIGDSLAHIFAKMGYKPVKINHLGDWGKQFGMLIVAYKKWGNEAAVQAHPIDELLKLYVRINAEAETDPSLDEEAREWFRRLEERDQEATELWQWFRDESLIEFNRLYDQLGVSFDSYNGEAFYNDKMDEVLELLEDKGLLVESKGAKVVNLEKYGIEHPALIKKSDGATLYITRDLAAALYRKRTYDFAKSVYVVGNEQAAHFKQLKAVLKEMGYDWSDDMTHVAFGLVTKGGAKLSTRKGNVILLEPTVAEAISRAANQIEAKNPKLANKEAVAHAVGVGAIKFYDLKTDRMNGYDFDLEAMVSFEGETGPYVQYAHARIQSILRKASFTPATDTSYSLNDPESWEIIKLIQDFPRIIKRAFDNFEPSIMAKFAIHLAQSFNKYYAHTRILEDDPERDNRLALCYATAIVLKEALRLLGVEAPNEM.

The short motif at 121 to 131 (PNIAKPFSIGH) is the 'HIGH' region element.

This sequence belongs to the class-I aminoacyl-tRNA synthetase family. As to quaternary structure, monomer.

The protein resides in the cytoplasm. The enzyme catalyses tRNA(Arg) + L-arginine + ATP = L-arginyl-tRNA(Arg) + AMP + diphosphate. This chain is Arginine--tRNA ligase, found in Streptococcus equi subsp. equi (strain 4047).